We begin with the raw amino-acid sequence, 113 residues long: MATPIIVGATIAGIAYSSRFLIRVIQRAKSKQLFEMVSTPGFTVETIEDGFENKMTPAEAANILGLKEESTKEEIKIRHKLLMIKNHPDKGGSSYLATKINEARNVLSSKNSN.

Residues 1 to 4 are Mitochondrial intermembrane-facing; that stretch reads MATP. A helical transmembrane segment spans residues 5-22; that stretch reads IIVGATIAGIAYSSRFLI. Over 23–113 the chain is Mitochondrial matrix; the sequence is RVIQRAKSKQ…RNVLSSKNSN (91 aa). Residues 59–113 form the J domain; sequence EAANILGLKEESTKEEIKIRHKLLMIKNHPDKGGSSYLATKINEARNVLSSKNSN.

This sequence belongs to the TIM14 family. As to quaternary structure, interacts with PHB2; the interaction associates DNAJC19 with the prohibitin complex. Interacts with TIMM16/PAM16. May be a component of the PAM complex at least composed of a mitochondrial HSP70 protein, GRPEL1 or GRPEL2, TIMM44, TIMM16/PAM16 and TIMM14/DNAJC19.

It is found in the mitochondrion inner membrane. In terms of biological role, mitochondrial co-chaperone which forms a complex with prohibitins to regulate cardiolipin remodeling. May be a component of the PAM complex, a complex required for the translocation of transit peptide-containing proteins from the inner membrane into the mitochondrial matrix in an ATP-dependent manner. May act as a co-chaperone that stimulate the ATP-dependent activity. The polypeptide is Mitochondrial import inner membrane translocase subunit TIM14 (dnajc19) (Dictyostelium discoideum (Social amoeba)).